The primary structure comprises 152 residues: Small ribosomal subunit protein uS15 (152 aa).

Residues 1-11 show a composition bias toward basic residues; that stretch reads MAKMHTKRKGK. Residues 1–23 are disordered; it reads MAKMHTKRKGKSSSTRPIRTDPP.

Belongs to the universal ribosomal protein uS15 family. In terms of assembly, part of the 30S ribosomal subunit.

This chain is Small ribosomal subunit protein uS15, found in Methanosarcina acetivorans (strain ATCC 35395 / DSM 2834 / JCM 12185 / C2A).